A 311-amino-acid chain; its full sequence is Pantothenate synthetase (311 aa).

An ATP-binding site is contributed by 43–50 (MGALHEGH). The active-site Proton donor is the His50. Gln75 contacts (R)-pantoate. A beta-alanine-binding site is contributed by Gln75. 161 to 164 (GEKD) is an ATP binding site. Position 167 (Gln167) interacts with (R)-pantoate. Residues Val190 and 198–201 (MSSR) contribute to the ATP site.

Belongs to the pantothenate synthetase family. As to quaternary structure, homodimer.

Its subcellular location is the cytoplasm. The enzyme catalyses (R)-pantoate + beta-alanine + ATP = (R)-pantothenate + AMP + diphosphate + H(+). The protein operates within cofactor biosynthesis; (R)-pantothenate biosynthesis; (R)-pantothenate from (R)-pantoate and beta-alanine: step 1/1. Functionally, catalyzes the condensation of pantoate with beta-alanine in an ATP-dependent reaction via a pantoyl-adenylate intermediate. The chain is Pantothenate synthetase from Mycolicibacterium vanbaalenii (strain DSM 7251 / JCM 13017 / BCRC 16820 / KCTC 9966 / NRRL B-24157 / PYR-1) (Mycobacterium vanbaalenii).